We begin with the raw amino-acid sequence, 891 residues long: Probable serine/threonine-protein kinase mkcC (891 aa).

Disordered regions lie at residues 24–70 (IELN…TATI), 85–121 (ANNNTNQLNKSTSSSSSLNNNKNEDNKSVTASIAPSS), 264–435 (DDPQ…AREK), 495–526 (NSLGSSINKNNSNNTTTTTTTTNTNNKSPEVS), and 565–588 (TTASQSSQAPYHPSHNGNEEDDYD). Residues 29–41 (QEEQQQPEQQEQP) are compositionally biased toward low complexity. Positions 45–58 (EELKDNNEKIKTSE) are enriched in basic and acidic residues. Low complexity-rich tracts occupy residues 61–70 (TTTTTTTATI), 86–105 (NNNTNQLNKSTSSSSSLNNN), 297–314 (STSNTTGKNTGKNSTTGK), 322–360 (SNSSNVPPSPVLASSASPSPKLKSSSSSIRNSGAISGTS), and 379–397 (TTGNSTTTTTTTTSTTTSS). Positions 422–432 (RKRKEQKRSRA) are enriched in basic residues. The span at 495–522 (NSLGSSINKNNSNNTTTTTTTTNTNNKS) shows a compositional bias: low complexity. Positions 616-864 (YKNLKQIGSG…AEQLLKHPWI (249 aa)) constitute a Protein kinase domain. ATP is bound by residues 622–630 (IGSGGFGSV) and lysine 645. The active-site Proton acceptor is aspartate 735.

Belongs to the protein kinase superfamily. STE Ser/Thr protein kinase family. STE20 subfamily. Requires Mg(2+) as cofactor.

The catalysed reaction is L-seryl-[protein] + ATP = O-phospho-L-seryl-[protein] + ADP + H(+). It catalyses the reaction L-threonyl-[protein] + ATP = O-phospho-L-threonyl-[protein] + ADP + H(+). This Dictyostelium discoideum (Social amoeba) protein is Probable serine/threonine-protein kinase mkcC.